We begin with the raw amino-acid sequence, 248 residues long: ATP synthase subunit a, chloroplastic (248 aa).

Transmembrane regions (helical) follow at residues 37–57 (AQVLITSWIVIAILLGLAILA), 96–116 (VPFIGTMFLFIFVSNWSGALL), 134–154 (DINTTVALALPTSVAYFYAGL), 200–220 (LVVAVPISLVPLVVPIPMMFL), and 221–241 (GLFTSAIQALIFATLAAAYIG).

Belongs to the ATPase A chain family. In terms of assembly, F-type ATPases have 2 components, CF(1) - the catalytic core - and CF(0) - the membrane proton channel. CF(1) has five subunits: alpha(3), beta(3), gamma(1), delta(1), epsilon(1). CF(0) has four main subunits: a, b, b' and c.

The protein resides in the plastid. The protein localises to the chloroplast thylakoid membrane. Its function is as follows. Key component of the proton channel; it plays a direct role in the translocation of protons across the membrane. The chain is ATP synthase subunit a, chloroplastic from Anthoceros angustus (Hornwort).